Here is a 335-residue protein sequence, read N- to C-terminus: Probable nicotianamine synthase 2 (335 aa).

It belongs to the nicotianamine synthase (NAS)-like family.

It carries out the reaction 3 S-adenosyl-L-methionine = nicotianamine + 3 S-methyl-5'-thioadenosine + 3 H(+). Functionally, synthesizes nicotianamine, a polyamine that is the first intermediate in the synthesis of the phytosiderophores of the mugineic acid type found in gramineae which serves as a sensor for the physiological iron status within the plant, and/or might be involved in the transport of iron. This Hordeum vulgare (Barley) protein is Probable nicotianamine synthase 2 (NAS2).